We begin with the raw amino-acid sequence, 388 residues long: Flavin-dependent monooxygenase (388 aa).

FAD is bound by residues 12 to 15 (VGVA), 34 to 36 (EKS), 44 to 47 (QALD), Arg-105, Tyr-267, Asp-289, and 296 to 302 (PLSGQGN).

The protein belongs to the aromatic-ring hydroxylase family. FAD is required as a cofactor.

It catalyses the reaction a tetracycline + NADPH + O2 + H(+) = a (1S,10aS)-3-(CONH2)-1-(Me2N)-3,3a,4,6-(HO)4-2,5-dioxo-1H,10aH,11H,11aH-cyclopenta[b]anthracene + CO + NADP(+) + H2O. It carries out the reaction 7-chlorotetracycline + NADPH + O2 + H(+) = (1S,10S,10aS)-3-(CONH2)-9-Cl-1-(Me2N)-3,3a,4,10-(HO)4-10-Me-2,5-dioxo-1H,10aH,11H,11aH-cyclopenta[b]anthracen-6-olate + CO + NADP(+) + H2O. Its activity is regulated as follows. Inhibited by anhydrotetracycline. Its function is as follows. An FAD-requiring monooxygenase active on tetracycline antibiotic and some of its derivatives, which leads to their inactivation. Expression in E.coli confers high resistance to tetracycline and oxytetracycline, does not confer resistance to minocycline or tigecycline. Degrades tetracycline and oxytetracycline; the reaction requires NADPH. Degrades and confers resistance to chlortetracycline. The sequence is that of Flavin-dependent monooxygenase (tet(50)) from Unknown prokaryotic organism.